Reading from the N-terminus, the 159-residue chain is Dehydratase GME11372 (159 aa).

Residues H79 and H104 contribute to the active site.

Belongs to the scytalone dehydratase family. Homotrimer. Each subunit contains an active site, located in the central part of the hydrophobic core of the monomer, which functions independently.

The protein operates within secondary metabolite biosynthesis. Functionally, dehydratase; part of the gene cluster that mediates the biosynthesis of dibenzodioxocinones such as pestalotiollide B, a novel class of inhibitors against cholesterol ester transfer protein (CEPT). The biosynthesis initiates from condensation of acetate and malonate units catalyzed by the non-reducing PKS pks8/GME11356. Pks8/GME11356 lacks a thioesterase (TE) domain, which is important to the cyclizing of the third ring of atrochrysone carboxylic acid, and the esterase GME11355 might play the role of TE and catalyzes the cyclization reaction of the C ring. The lactamase-like protein GME11357 (or other beta-lactamases in Pestalotiopsis microspora) probably hydrolyzes the thioester bond between the ACP of pks8/GME11356 and the intermediate to release atrochrysone carboxylic acid, which is spontaneously dehydrates to form endocrocin anthrone. Endocrocin anthrone is further converted to emodin via the endocrocin intermediate. Emodin is then oxidized by several enzymes such as the Baeyer-Villiger oxidase GME11358, the oxidoreductase GME11367, the short chain dehydrogenase/reductase GME11373, as well as by other oxidoreductases from the cluster, to modify the A and C rings and open the B ring, and finally yield monodictyphenone. The prenyltransferase GME11375 may catalyze the addition reaction between the C5 side chains and the carbon bone of dibenzodioxocinones. The remaining biochemical reactions to the final product dibenzodioxocinones should be methylation catalyzed by methyltransferase GME11366 and reduction and lactonization reaction catalyzed by a series of oxidordeuctases. The polypeptide is Dehydratase GME11372 (Pestalotiopsis microspora).